The sequence spans 940 residues: DNA gyrase subunit A (940 aa).

The interval 1–22 (MSDHTNPPSAPPDDDPNGGSLL) is disordered. The region spanning 48-538 (LPDARDGLKP…SLADQDDESL (491 aa)) is the Topo IIA-type catalytic domain. Y136 (O-(5'-phospho-DNA)-tyrosine intermediate) is an active-site residue. A GyrA-box motif is present at residues 565 to 571 (QHRGGRG). Acidic residues predominate over residues 914 to 924 (ESVDDNGDDAD). Residues 914-940 (ESVDDNGDDADSVAPAAPDGQVTDSDD) form a disordered region.

Belongs to the type II topoisomerase GyrA/ParC subunit family. As to quaternary structure, heterotetramer, composed of two GyrA and two GyrB chains. In the heterotetramer, GyrA contains the active site tyrosine that forms a transient covalent intermediate with DNA, while GyrB binds cofactors and catalyzes ATP hydrolysis.

The protein resides in the cytoplasm. The catalysed reaction is ATP-dependent breakage, passage and rejoining of double-stranded DNA.. Its function is as follows. A type II topoisomerase that negatively supercoils closed circular double-stranded (ds) DNA in an ATP-dependent manner to modulate DNA topology and maintain chromosomes in an underwound state. Negative supercoiling favors strand separation, and DNA replication, transcription, recombination and repair, all of which involve strand separation. Also able to catalyze the interconversion of other topological isomers of dsDNA rings, including catenanes and knotted rings. Type II topoisomerases break and join 2 DNA strands simultaneously in an ATP-dependent manner. The sequence is that of DNA gyrase subunit A from Granulibacter bethesdensis (strain ATCC BAA-1260 / CGDNIH1).